We begin with the raw amino-acid sequence, 448 residues long: Zinc finger CCCH domain-containing protein 43 (448 aa).

A disordered region spans residues Met1 to Val106. Residues Ser24 to Lys45 are compositionally biased toward basic and acidic residues. A compositionally biased stretch (polar residues) spans Val63–Asn79. Residues Gln80–Arg89 show a composition bias toward acidic residues. 5 C3H1-type zinc fingers span residues Arg110 to Ala138, Lys158 to Pro186, Arg204 to Pro232, Arg346 to Asn374, and Arg392 to Gln420. Residues Ser424–Asn448 form a disordered region. A compositionally biased stretch (polar residues) spans Val437–Asn448.

The protein localises to the nucleus. In Arabidopsis thaliana (Mouse-ear cress), this protein is Zinc finger CCCH domain-containing protein 43.